Reading from the N-terminus, the 629-residue chain is tRNA uridine 5-carboxymethylaminomethyl modification enzyme MnmG (629 aa).

Position 13 to 18 (13 to 18 (GGGHAG)) interacts with FAD. 273 to 287 (GPRYCPSIEDKITRF) contributes to the NAD(+) binding site.

The protein belongs to the MnmG family. Homodimer. Heterotetramer of two MnmE and two MnmG subunits. FAD is required as a cofactor.

It is found in the cytoplasm. NAD-binding protein involved in the addition of a carboxymethylaminomethyl (cmnm) group at the wobble position (U34) of certain tRNAs, forming tRNA-cmnm(5)s(2)U34. The polypeptide is tRNA uridine 5-carboxymethylaminomethyl modification enzyme MnmG (Aeromonas hydrophila subsp. hydrophila (strain ATCC 7966 / DSM 30187 / BCRC 13018 / CCUG 14551 / JCM 1027 / KCTC 2358 / NCIMB 9240 / NCTC 8049)).